The chain runs to 469 residues: 3-isopropylmalate dehydratase large subunit (469 aa).

Cysteine 349, cysteine 410, and cysteine 413 together coordinate [4Fe-4S] cluster.

Belongs to the aconitase/IPM isomerase family. LeuC type 1 subfamily. In terms of assembly, heterodimer of LeuC and LeuD. The cofactor is [4Fe-4S] cluster.

The catalysed reaction is (2R,3S)-3-isopropylmalate = (2S)-2-isopropylmalate. It functions in the pathway amino-acid biosynthesis; L-leucine biosynthesis; L-leucine from 3-methyl-2-oxobutanoate: step 2/4. Functionally, catalyzes the isomerization between 2-isopropylmalate and 3-isopropylmalate, via the formation of 2-isopropylmaleate. The protein is 3-isopropylmalate dehydratase large subunit of Neisseria gonorrhoeae (strain NCCP11945).